The following is a 135-amino-acid chain: Ribonuclease VapC9 (135 aa).

Positions 15 to 118 constitute a PINc domain; sequence VVDTNVLMYV…LKRKAKQRGI (104 aa). Asp-17 and Asp-88 together coordinate Mg(2+).

Belongs to the PINc/VapC protein family. In terms of assembly, dimer. Mg(2+) is required as a cofactor.

Functionally, toxic component of a type II toxin-antitoxin (TA) system. An RNase. The polypeptide is Ribonuclease VapC9 (Archaeoglobus fulgidus (strain ATCC 49558 / DSM 4304 / JCM 9628 / NBRC 100126 / VC-16)).